The primary structure comprises 256 residues: SPX domain-containing protein 1 (256 aa).

The 155-residue stretch at 1 to 155 folds into the SPX domain; that stretch reads MKFGKSLSNQ…GDLMRLPFIQ (155 aa). Positions 30-46 match the Bipartite nuclear localization signal motif; sequence KRLKLIGSKTADRPVKR.

In terms of assembly, interacts with PHR1 in a highly Pi-dependent manner.

It localises to the nucleus. Plays a positive role in plant adaptation to phosphate starvation. Inhibits PHR1 DNA-binding activity in a Pi-dependent manner. The polypeptide is SPX domain-containing protein 1 (Arabidopsis thaliana (Mouse-ear cress)).